The sequence spans 437 residues: UDP-glucose 6-dehydrogenase (437 aa).

Residues Val11, Asp30, Lys35, Thr86, Thr122, and Glu155 each coordinate NAD(+). Residues 151 to 155 (EFLRE), Lys209, Asn213, 254 to 258 (FLHAG), and Gly262 each bind substrate. Catalysis depends on Cys265, which acts as the Nucleophile. Lys268 is a binding site for NAD(+). Position 326 (Lys326) interacts with substrate. An NAD(+)-binding site is contributed by Arg333.

It belongs to the UDP-glucose/GDP-mannose dehydrogenase family.

It carries out the reaction UDP-alpha-D-glucose + 2 NAD(+) + H2O = UDP-alpha-D-glucuronate + 2 NADH + 3 H(+). It functions in the pathway nucleotide-sugar biosynthesis; UDP-alpha-D-glucuronate biosynthesis; UDP-alpha-D-glucuronate from UDP-alpha-D-glucose: step 1/1. It participates in capsule biogenesis; capsule polysaccharide biosynthesis. The sequence is that of UDP-glucose 6-dehydrogenase from Rhizobium meliloti (strain 1021) (Ensifer meliloti).